A 511-amino-acid polypeptide reads, in one-letter code: Cytochrome P450 monooxygenase PUL2 (511 aa).

Residues 14–34 (WMAFVYFTPVLFVVLYLLKEW) traverse the membrane as a helical segment. Residues N116, N141, and N442 are each glycosylated (N-linked (GlcNAc...) asparagine). C462 contacts heme.

This sequence belongs to the cytochrome P450 family. Heme is required as a cofactor.

It localises to the membrane. It functions in the pathway siderophore biosynthesis. In terms of biological role, cytochrome P450 monooxygenase; part of the PUL gene cluster that mediates the formation of pulcherrimin, a red iron-containing pigment composed of two cyclized and modified leucine molecules that acts as a siderophore, a chelator that binds iron outside the cell for subsequent uptake. Two leucine molecules are cyclized via a cyclodipeptide synthase, and the resulting diketopiperazine is oxidized by a cytochrome P450 monooxygenase to generate pulcherriminic acid (PA), which can then spontaneously bind iron to form pulcherrimin. The probable cyclodipeptide synthase PUL1 and the cytochrome P450 monooxygenase PUL2 encode the enzymes responsible for the two-step pulcherrimin biosynthesis pathway. This chain is Cytochrome P450 monooxygenase PUL2, found in Kluyveromyces lactis (strain ATCC 8585 / CBS 2359 / DSM 70799 / NBRC 1267 / NRRL Y-1140 / WM37) (Yeast).